The chain runs to 661 residues: UvrABC system protein C (661 aa).

Residues Ala25–Val104 enclose the GIY-YIG domain. Residues Asp214–Leu249 form the UVR domain. The span at Phe636 to Leu652 shows a compositional bias: basic and acidic residues. Residues Phe636 to Ala661 form a disordered region.

The protein belongs to the UvrC family. In terms of assembly, interacts with UvrB in an incision complex.

The protein localises to the cytoplasm. Functionally, the UvrABC repair system catalyzes the recognition and processing of DNA lesions. UvrC both incises the 5' and 3' sides of the lesion. The N-terminal half is responsible for the 3' incision and the C-terminal half is responsible for the 5' incision. In Synechococcus sp. (strain CC9605), this protein is UvrABC system protein C.